A 214-amino-acid polypeptide reads, in one-letter code: Probable nicotinate-nucleotide adenylyltransferase (214 aa).

Belongs to the NadD family.

It catalyses the reaction nicotinate beta-D-ribonucleotide + ATP + H(+) = deamido-NAD(+) + diphosphate. It participates in cofactor biosynthesis; NAD(+) biosynthesis; deamido-NAD(+) from nicotinate D-ribonucleotide: step 1/1. Its function is as follows. Catalyzes the reversible adenylation of nicotinate mononucleotide (NaMN) to nicotinic acid adenine dinucleotide (NaAD). This is Probable nicotinate-nucleotide adenylyltransferase from Psychromonas ingrahamii (strain DSM 17664 / CCUG 51855 / 37).